A 402-amino-acid polypeptide reads, in one-letter code: Argininosuccinate synthase (402 aa).

7-15 lines the ATP pocket; that stretch reads LYSGGLDTS. Tyr-83 provides a ligand contact to L-citrulline. Residue Gly-113 coordinates ATP. L-aspartate-binding residues include Thr-115, Asn-119, and Asp-120. Asn-119 provides a ligand contact to L-citrulline. Positions 123, 169, 178, 253, and 265 each coordinate L-citrulline.

The protein belongs to the argininosuccinate synthase family. Type 1 subfamily. As to quaternary structure, homotetramer.

It localises to the cytoplasm. It carries out the reaction L-citrulline + L-aspartate + ATP = 2-(N(omega)-L-arginino)succinate + AMP + diphosphate + H(+). The protein operates within amino-acid biosynthesis; L-arginine biosynthesis; L-arginine from L-ornithine and carbamoyl phosphate: step 2/3. This chain is Argininosuccinate synthase, found in Thermoplasma acidophilum (strain ATCC 25905 / DSM 1728 / JCM 9062 / NBRC 15155 / AMRC-C165).